A 1890-amino-acid chain; its full sequence is Callose synthase 9 (1890 aa).

Topologically, residues 1–489 (MSRAESSWER…EHRTFLHLYH (489 aa)) are cytoplasmic. The helical transmembrane segment at 490–510 (SFHRLWIFLAMMFQALAIIAF) threads the bilayer. The Extracellular portion of the chain corresponds to 511–523 (NKDDLTSRKTLLQ). A helical transmembrane segment spans residues 524-544 (ILSLGPTFVVMKFSESVLEVI). Residues 545 to 560 (MMYGAYSTTRRLAVSR) lie on the Cytoplasmic side of the membrane. A helical membrane pass occupies residues 561 to 581 (IFLRFIWFGLASVFISFLYVK). Over 582 to 591 (SLKAPNSDSP) the chain is Extracellular. A helical membrane pass occupies residues 592-612 (IVQLYLIVIAIYGGVQFFFSI). The Cytoplasmic portion of the chain corresponds to 613 to 658 (LMRIPTCHNIANKCDRWPVIRFFKWMRQERHYVGRGMYERTSDFIK). Residues 659-679 (YLLFWLVVLSAKFSFAYFLQI) form a helical membrane-spanning segment. Residues 680 to 722 (KPLVGPTRMIVKQNNIPYSWHDFVSRKNYNALTVASLWAPVVA) lie on the Extracellular side of the membrane. The chain crosses the membrane as a helical span at residues 723–743 (IYLLDIHIFYTIFSAFLGFLL). At 744–1457 (GARDRLGEIR…QLLDFFRMMS (714 aa)) the chain is on the cytoplasmic side. A helical transmembrane segment spans residues 1458–1478 (FFFTTVGFYLCTMLTVLTVYI). The Extracellular portion of the chain corresponds to 1479–1512 (FLYGRAYLALSGVGATIRERAILLDDTALSAALN). Residues 1513 to 1533 (AQFLFQIGVFTAVPMVLGFIL) traverse the membrane as a helical segment. At 1534 to 1539 (EQGFLQ) the chain is on the cytoplasmic side. Residues 1540 to 1560 (AIVSFITMQFQLCTVFFTFSL) form a helical membrane-spanning segment. Topologically, residues 1561-1609 (GTRTHYFGRTILHGGARYQATGRGFVVKHIKFSENYRLYSRSHFVKAME) are extracellular. 2 consecutive transmembrane segments (helical) span residues 1610–1630 (VILL…AVSY) and 1631–1651 (ILLT…PYLF). At 1652 to 1703 (NPAGFEWQKVVEDFKEWTNWLFYRGGIGVKGAESWEAWWEEELSHIRTLSGR) the chain is on the extracellular side. The chain crosses the membrane as a helical span at residues 1704–1724 (IMETILSLRFFIFQYGIVYKL). The Cytoplasmic portion of the chain corresponds to 1725-1732 (KLQGSDTS). Residues 1733–1753 (FAVYGWSWVAFAMIIVLFKVF) traverse the membrane as a helical segment. Residues 1754 to 1768 (TFSQKISVNFQLLLR) are Extracellular-facing. A helical transmembrane segment spans residues 1769–1789 (FIQGLSLLMALAGIIVAVVLT). Topologically, residues 1790–1795 (PLSVTD) are cytoplasmic. A helical membrane pass occupies residues 1796 to 1816 (IFACVLAFIPTGWGILSIACA). The Extracellular portion of the chain corresponds to 1817–1838 (WKPVLKRMGMWKSIRSLARLYD). Residues 1839–1859 (ALMGMLIFLPVALCSWFPFVS) form a helical membrane-spanning segment. At 1860 to 1890 (TFQTRMMFNQAFSRGLEISLILAGDNPNSGL) the chain is on the cytoplasmic side.

Belongs to the glycosyltransferase 48 family.

It localises to the cell membrane. The enzyme catalyses [(1-&gt;3)-beta-D-glucosyl](n) + UDP-alpha-D-glucose = [(1-&gt;3)-beta-D-glucosyl](n+1) + UDP + H(+). Involved in sporophytic and gametophytic development. Required for normal plant development. During pollen formation, required for the entry of microspores into mitosis and microspore symmetric division. May be required for correct temporal and spatial control of callose deposition during pollen mitosis. During plant growth and development, callose is found as a transitory component of the cell plate in dividing cells, is a major component of pollen mother cell walls and pollen tubes, and is found as a structural component of plasmodesmatal canals. In Arabidopsis thaliana (Mouse-ear cress), this protein is Callose synthase 9 (CALS9).